The sequence spans 69 residues: Cap-specific mRNA (nucleoside-2'-O-)-methyltransferase (69 aa).

Tyrosine 22 contacts mRNA. S-adenosyl-L-methionine contacts are provided by glutamine 39, tyrosine 66, and glycine 68.

Belongs to the class I-like SAM-binding methyltransferase superfamily. Poxvirus/kinetoplastid 2'-O-MTase family. In terms of assembly, interacts with poly(A) polymerase catalytic subunit OPG063. Interacts with OPG109 and OPG123; these interactions might help linking transcription to capping and polyadenylation.

The protein resides in the virion. It catalyses the reaction a 5'-end (N(7)-methyl 5'-triphosphoguanosine)-ribonucleoside in mRNA + S-adenosyl-L-methionine = a 5'-end (N(7)-methyl 5'-triphosphoguanosine)-(2'-O-methyl-ribonucleoside) in mRNA + S-adenosyl-L-homocysteine + H(+). In terms of biological role, displays methyltransferase, positive regulation of the poly(A) polymerase and transcription elongation activities. Involved in the modification of both mRNA ends and in intermediate and late gene positive transcription elongation. At the mRNAs 5' end, methylates the ribose 2' OH group of the first transcribed nucleotide, thereby producing a 2'-O-methylpurine cap. At the 3' end, functions as a processivity factor which stimulates the activity of the viral poly(A) polymerase OPG063 that creates mRNA's poly(A) tail. In the presence of OPG102, OPG063 does not dissociate from the RNA allowing tail elongation to around 250 adenylates. This Sus scrofa (Pig) protein is Cap-specific mRNA (nucleoside-2'-O-)-methyltransferase (OPG102).